The primary structure comprises 559 residues: 5'-AMP-activated protein kinase catalytic subunit alpha-1 (559 aa).

The Protein kinase domain maps to 27 to 279 (YILGDTLGVG…IKDIREHEWF (253 aa)). At Thr32 the chain carries Phosphothreonine. ATP-binding positions include 33-41 (LGVGTFGKV) and Lys56. Residue Asp150 is the Proton acceptor of the active site. Thr183 carries the post-translational modification Phosphothreonine; by LKB1 and CaMKK2. Thr269 and Thr355 each carry phosphothreonine. Residues 302–381 (EALKEVCEKF…PERVPFLVAE (80 aa)) are AIS. The residue at position 356 (Ser356) is a Phosphoserine. Position 360 is a phosphoserine; by ULK1 (Ser360). The residue at position 368 (Thr368) is a Phosphothreonine; by ULK1. Thr382 carries the post-translational modification Phosphothreonine. Ser397, Ser467, and Ser486 each carry phosphoserine. Polar residues predominate over residues 485-505 (KSGTATPQRSGSVSNYRSCQR). Residues 485-536 (KSGTATPQRSGSVSNYRSCQRSDSDAEAQGKSSEVSLTSSVTSLDSSPVDLT) are disordered. Phosphothreonine occurs at positions 488 and 490. Ser496, Ser508, Ser524, and Ser527 each carry phosphoserine. The segment covering 516-535 (SSEVSLTSSVTSLDSSPVDL) has biased composition (low complexity).

Belongs to the protein kinase superfamily. CAMK Ser/Thr protein kinase family. SNF1 subfamily. As to quaternary structure, AMPK is a heterotrimer of an alpha catalytic subunit (PRKAA1 or PRKAA2), a beta (PRKAB1 or PRKAB2) and a gamma non-catalytic subunits (PRKAG1, PRKAG2 or PRKAG3). Interacts with FNIP1 and FNIP2. In terms of assembly, (Microbial infection) Interacts with Dengue type 2 virus non-structural protein 1; this interaction promotes the AMPK/ERK/mTOR signaling pathway to induce autophagy. It depends on Mg(2+) as a cofactor. Post-translationally, ubiquitinated. Phosphorylated at Thr-183 by STK11/LKB1 in complex with STE20-related adapter-alpha (STRADA) pseudo kinase and CAB39. Also phosphorylated at Thr-183 by CAMKK2; triggered by a rise in intracellular calcium ions, without detectable changes in the AMP/ATP ratio. CAMKK1 can also phosphorylate Thr-183, but at a much lower level. Dephosphorylated by protein phosphatase 2A and 2C (PP2A and PP2C). Phosphorylated by ULK1 and ULK2; leading to negatively regulate AMPK activity and suggesting the existence of a regulatory feedback loop between ULK1, ULK2 and AMPK. Dephosphorylated by PPM1A and PPM1B. In terms of processing, glycosylated; O-GlcNAcylated by OGT, promoting the AMP-activated protein kinase (AMPK) activity.

The protein localises to the cytoplasm. Its subcellular location is the nucleus. The enzyme catalyses L-seryl-[protein] + ATP = O-phospho-L-seryl-[protein] + ADP + H(+). It carries out the reaction L-threonyl-[protein] + ATP = O-phospho-L-threonyl-[protein] + ADP + H(+). The catalysed reaction is L-seryl-[acetyl-CoA carboxylase] + ATP = O-phospho-L-seryl-[acetyl-CoA carboxylase] + ADP + H(+). It catalyses the reaction L-seryl-[3-hydroxy-3-methylglutaryl-coenzyme A reductase] + ATP = O-phospho-L-seryl-[3-hydroxy-3-methylglutaryl-coenzyme A reductase] + ADP + H(+). The enzyme catalyses L-seryl-[tau protein] + ATP = O-phospho-L-seryl-[tau protein] + ADP + H(+). It carries out the reaction L-threonyl-[tau protein] + ATP = O-phospho-L-threonyl-[tau protein] + ADP + H(+). Its activity is regulated as follows. Activated by phosphorylation on Thr-183. Binding of AMP to non-catalytic gamma subunit (PRKAG1, PRKAG2 or PRKAG3) results in allosteric activation, inducing phosphorylation on Thr-183. AMP-binding to gamma subunit also sustains activity by preventing dephosphorylation of Thr-183. ADP also stimulates Thr-183 phosphorylation, without stimulating already phosphorylated AMPK. ATP promotes dephosphorylation of Thr-183, rendering the enzyme inactive. Under physiological conditions AMPK mainly exists in its inactive form in complex with ATP, which is much more abundant than AMP. AMPK is activated by antihyperglycemic drug metformin, a drug prescribed to patients with type 2 diabetes: in vivo, metformin seems to mainly inhibit liver gluconeogenesis. However, metformin can be used to activate AMPK in muscle and other cells in culture or ex vivo. Selectively inhibited by compound C (6-[4-(2-Piperidin-1-yl-ethoxy)-phenyl)]-3-pyridin-4-yl-pyyrazolo[1,5-a] pyrimidine. Activated by resveratrol, a natural polyphenol present in red wine, and S17834, a synthetic polyphenol. Catalytic subunit of AMP-activated protein kinase (AMPK), an energy sensor protein kinase that plays a key role in regulating cellular energy metabolism. In response to reduction of intracellular ATP levels, AMPK activates energy-producing pathways and inhibits energy-consuming processes: inhibits protein, carbohydrate and lipid biosynthesis, as well as cell growth and proliferation. AMPK acts via direct phosphorylation of metabolic enzymes, and by longer-term effects via phosphorylation of transcription regulators. Regulates lipid synthesis by phosphorylating and inactivating lipid metabolic enzymes such as ACACA, ACACB, GYS1, HMGCR and LIPE; regulates fatty acid and cholesterol synthesis by phosphorylating acetyl-CoA carboxylase (ACACA and ACACB) and hormone-sensitive lipase (LIPE) enzymes, respectively. Promotes lipolysis of lipid droplets by mediating phosphorylation of isoform 1 of CHKA (CHKalpha2). Regulates insulin-signaling and glycolysis by phosphorylating IRS1, PFKFB2 and PFKFB3. AMPK stimulates glucose uptake in muscle by increasing the translocation of the glucose transporter SLC2A4/GLUT4 to the plasma membrane, possibly by mediating phosphorylation of TBC1D4/AS160. Regulates transcription and chromatin structure by phosphorylating transcription regulators involved in energy metabolism such as CRTC2/TORC2, FOXO3, histone H2B, HDAC5, MEF2C, MLXIPL/ChREBP, EP300, HNF4A, p53/TP53, SREBF1, SREBF2 and PPARGC1A. Acts as a key regulator of glucose homeostasis in liver by phosphorylating CRTC2/TORC2, leading to CRTC2/TORC2 sequestration in the cytoplasm. In response to stress, phosphorylates 'Ser-36' of histone H2B (H2BS36ph), leading to promote transcription. Acts as a key regulator of cell growth and proliferation by phosphorylating FNIP1, TSC2, RPTOR, WDR24 and ATG1/ULK1: in response to nutrient limitation, negatively regulates the mTORC1 complex by phosphorylating RPTOR component of the mTORC1 complex and by phosphorylating and activating TSC2. Also phosphorylates and inhibits GATOR2 subunit WDR24 in response to nutrient limitation, leading to suppress glucose-mediated mTORC1 activation. In response to energetic stress, phosphorylates FNIP1, inactivating the non-canonical mTORC1 signaling, thereby promoting nuclear translocation of TFEB and TFE3, and inducing transcription of lysosomal or autophagy genes. In response to nutrient limitation, promotes autophagy by phosphorylating and activating ATG1/ULK1. In that process, it also activates WDR45/WIPI4. Phosphorylates CASP6, thereby preventing its autoprocessing and subsequent activation. In response to nutrient limitation, phosphorylates transcription factor FOXO3 promoting FOXO3 mitochondrial import. Also acts as a regulator of cellular polarity by remodeling the actin cytoskeleton; probably by indirectly activating myosin. AMPK also acts as a regulator of circadian rhythm by mediating phosphorylation of CRY1, leading to destabilize it. May regulate the Wnt signaling pathway by phosphorylating CTNNB1, leading to stabilize it. Also has tau-protein kinase activity: in response to amyloid beta A4 protein (APP) exposure, activated by CAMKK2, leading to phosphorylation of MAPT/TAU; however the relevance of such data remains unclear in vivo. Also phosphorylates CFTR, EEF2K, KLC1, NOS3 and SLC12A1. Regulates hepatic lipogenesis. Activated via SIRT3, represses sterol regulatory element-binding protein (SREBP) transcriptional activities and ATP-consuming lipogenesis to restore cellular energy balance. Upon stress, regulates mitochondrial fragmentation through phosphorylation of MTFR1L. This is 5'-AMP-activated protein kinase catalytic subunit alpha-1 from Homo sapiens (Human).